Reading from the N-terminus, the 95-residue chain is Enhancer of yellow 2b transcription factor (95 aa).

It belongs to the ENY2 family. As to expression, expressed specifically in testis.

Testis-specific paralog of the ubiquitously expressed transcription and mRNA export factor e(y)2. Cannot functionally replace e(y)2. This Drosophila melanogaster (Fruit fly) protein is Enhancer of yellow 2b transcription factor (e(y)2b).